Here is a 313-residue protein sequence, read N- to C-terminus: GDP-D-glycero-alpha-D-manno-heptose dehydrogenase (313 aa).

NADH-binding positions include 13–14 (YI), 33–39 (DNLMFDQ), Phe-37, 57–58 (DA), Leu-77, and 144–148 (YGIDK). Thr-168 lines the GDP pocket. NADH contacts are provided by residues Val-169 and 175–177 (RMR). GDP-binding positions include 179–184 (DLLVND), 196–198 (VLF), Arg-204, Lys-242, and Arg-270. NADH is bound at residue Asn-311.

As to quaternary structure, homotetramer. The cofactor is NAD(+).

It carries out the reaction GDP-D-glycero-alpha-D-manno-heptose + 2-oxoglutarate = GDP-D-glycero-4-keto-alpha-D-lyxo-heptose + (S)-2-hydroxyglutarate. The protein operates within capsule biogenesis; capsule polysaccharide biosynthesis. In terms of biological role, NAD-dependent dehydrogenase involved in the biosynthesis of heptose moieties with a hydroxyl group at C6 found on the capsular polysaccharide (CPS) of C.jejuni. Catalyzes the initial oxidation of C4 of the GDP-D-glycero-alpha-D-manno-heptose to form GDP-D-glycero-4-keto-alpha-D-lyxo-heptose in the presence of alpha-ketoglutarate required to recycle the NADH nucleotide. This Campylobacter jejuni subsp. jejuni serotype O:2 (strain ATCC 700819 / NCTC 11168) protein is GDP-D-glycero-alpha-D-manno-heptose dehydrogenase.